Here is a 392-residue protein sequence, read N- to C-terminus: B2 bradykinin receptor (392 aa).

The Extracellular segment spans residues 1–61 (MPCSWKLLGF…EWWSWLNAIQ (61 aa)). Residues asparagine 29 and asparagine 40 are each glycosylated (N-linked (GlcNAc...) asparagine). A helical transmembrane segment spans residues 62–85 (APFLWVLFLLAALENLFVLSVFFL). Over 86–94 (HKNSCTVAE) the chain is Cytoplasmic. Residues 95-119 (IYLGNLAAADLILACGLPFWAITIA) form a helical membrane-spanning segment. Residues 120 to 132 (NNFDWVFGEVLCR) lie on the Extracellular side of the membrane. The cysteines at positions 131 and 212 are disulfide-linked. A helical transmembrane segment spans residues 133 to 154 (VVNTMIYMNLYSSICFLMLVSI). Residues 155-176 (DRYLALVKTMSMGRMRGVRWAK) lie on the Cytoplasmic side of the membrane. Phosphotyrosine is present on tyrosine 157. The chain crosses the membrane as a helical span at residues 177–199 (LYSLVIWGCTLLLSSPMLVFRTM). At 200–222 (REYSEEGHNVTACVIVYPSRSWE) the chain is on the extracellular side. A glycan (N-linked (GlcNAc...) asparagine) is linked at asparagine 208. A helical transmembrane segment spans residues 223 to 249 (VFTNVLLNLVGFLLPLSVITFCTVRIL). Over 250 to 268 (QVLRNNEMKKFKEVQTERK) the chain is Cytoplasmic. Residues 269 to 293 (ATVLVLAVLGLFVLCWVPFQISTFL) traverse the membrane as a helical segment. The Extracellular portion of the chain corresponds to 294–312 (DTLLRLGVLSGCWDEHAVD). Residues 313–336 (VITQISSYVAYSNSGLNPLVYVIV) form a helical membrane-spanning segment. Over 337-392 (GKRFRKKSREVYRVLCQKGGCMGEPVQMENSMGTLRTSISVERQIHKLQDWAGKKQ) the chain is Cytoplasmic. Tyrosine 348 bears the Phosphotyrosine mark. Cysteine 352 is lipidated: S-palmitoyl cysteine. Position 367 is a phosphoserine (serine 367). The residue at position 370 (threonine 370) is a Phosphothreonine. Phosphoserine; by GRK6 is present on residues serine 374 and serine 376.

The protein belongs to the G-protein coupled receptor 1 family. Bradykinin receptor subfamily. BDKRB2 sub-subfamily. As to quaternary structure, forms a complex with PECAM1 and GNAQ. Interacts with PECAM1.

It localises to the cell membrane. Its function is as follows. Receptor for bradykinin. It is associated with G proteins that activate a phosphatidylinositol-calcium second messenger system. This is B2 bradykinin receptor (Bdkrb2) from Mus musculus (Mouse).